A 423-amino-acid polypeptide reads, in one-letter code: MLFERARQVFPGGVNSPARALKHLPSSLVARAASGPYLYTDRGRLVDYCMAFGAIILGHAHPRVKRAVEEQLERGWIYALLTEQEVEFAEAIRRHMPSVEKMRIVNTGTEATMNAIRLARGYTKRDVIIKFDGNFHGSHDYVLVKAGSGAATWGIPTSAGVPQDVVKLTVVAPYNDVDAFLKAVKEVGDRLAAVIAEPVAGNYGLIIPDAEFLKALREETKRVGALLIFDEVITGFRLGLGGAQGRFGIRPDLTTLGKAVGGGFPIGIFGGRAEVMDLVAPSGPVYNAGTYNAHPVSVTAGLAVLKELETGEPFRTADEAAERLAKGIEDIAGRLGFDVVVKKIASMFQFYFKKGDVKTPQDVRESNEKMYLKLHEIALRHGVYLTPSQFEVNFTSAAHTREVVEETLAALEKAFQQLKTEIG.

N6-(pyridoxal phosphate)lysine is present on lysine 258.

The protein belongs to the class-III pyridoxal-phosphate-dependent aminotransferase family. HemL subfamily. The cofactor is pyridoxal 5'-phosphate.

The protein localises to the cytoplasm. It carries out the reaction (S)-4-amino-5-oxopentanoate = 5-aminolevulinate. It functions in the pathway porphyrin-containing compound metabolism; protoporphyrin-IX biosynthesis; 5-aminolevulinate from L-glutamyl-tRNA(Glu): step 2/2. This chain is Glutamate-1-semialdehyde 2,1-aminomutase, found in Pyrobaculum arsenaticum (strain DSM 13514 / JCM 11321 / PZ6).